The sequence spans 475 residues: Aspartyl/glutamyl-tRNA(Asn/Gln) amidotransferase subunit B (475 aa).

This sequence belongs to the GatB/GatE family. GatB subfamily. As to quaternary structure, heterotrimer of A, B and C subunits.

The enzyme catalyses L-glutamyl-tRNA(Gln) + L-glutamine + ATP + H2O = L-glutaminyl-tRNA(Gln) + L-glutamate + ADP + phosphate + H(+). It carries out the reaction L-aspartyl-tRNA(Asn) + L-glutamine + ATP + H2O = L-asparaginyl-tRNA(Asn) + L-glutamate + ADP + phosphate + 2 H(+). Its function is as follows. Allows the formation of correctly charged Asn-tRNA(Asn) or Gln-tRNA(Gln) through the transamidation of misacylated Asp-tRNA(Asn) or Glu-tRNA(Gln) in organisms which lack either or both of asparaginyl-tRNA or glutaminyl-tRNA synthetases. The reaction takes place in the presence of glutamine and ATP through an activated phospho-Asp-tRNA(Asn) or phospho-Glu-tRNA(Gln). In Thermodesulfovibrio yellowstonii (strain ATCC 51303 / DSM 11347 / YP87), this protein is Aspartyl/glutamyl-tRNA(Asn/Gln) amidotransferase subunit B.